Consider the following 258-residue polypeptide: NAD kinase (258 aa).

Catalysis depends on aspartate 51, which acts as the Proton acceptor. NAD(+) contacts are provided by residues 51–52, lysine 56, 119–120, lysine 130, aspartate 149, 160–165, and alanine 184; these read DG, ND, and TAYSLS.

It belongs to the NAD kinase family. It depends on a divalent metal cation as a cofactor.

The protein localises to the cytoplasm. The enzyme catalyses NAD(+) + ATP = ADP + NADP(+) + H(+). Involved in the regulation of the intracellular balance of NAD and NADP, and is a key enzyme in the biosynthesis of NADP. Catalyzes specifically the phosphorylation on 2'-hydroxyl of the adenosine moiety of NAD to yield NADP. This chain is NAD kinase, found in Thermotoga sp. (strain RQ2).